Reading from the N-terminus, the 269-residue chain is CUE domain-containing protein 2-B (269 aa).

A disordered region spans residues 110–130 (ASPSEKTATEPLEGAVAQDKD). A CUE domain is found at 131 to 174 (DPKTGVDLLLEIFPSCTITQAQTALSMAKGDLEDAVQIIVDGKV).

It belongs to the CUEDC2 family. Post-translationally, phosphorylated.

The protein localises to the cytoplasm. It is found in the nucleus. May play a role in targeting proteins for ubiquitination and subsequent proteasomal degradation. The protein is CUE domain-containing protein 2-B (cuedc2-b) of Xenopus laevis (African clawed frog).